Here is a 208-residue protein sequence, read N- to C-terminus: Receptor expression-enhancing protein 6 (208 aa).

Helical transmembrane passes span 49-69 (GAFL…GFVY), 93-113 (WVIY…LHWF), and 115-135 (FYYV…SWNG). The interval 187-208 (VGPAESEPRSLPSSAHTEPTVD) is disordered. Over residues 197-208 (LPSSAHTEPTVD) the composition is skewed to polar residues.

Belongs to the DP1 family.

The protein resides in the endoplasmic reticulum membrane. It localises to the cytoplasmic vesicle. Its subcellular location is the clathrin-coated vesicle membrane. In terms of biological role, required correct function and survival of retinal photoreceptors. Required for retinal development. In rod photoreceptors, facilitates stability and/or trafficking of guanylate cyclases and is required to maintain endoplasmic reticulum and mitochondrial homeostasis. May play a role in clathrin-coated intracellular vesicle trafficking of proteins from the endoplasmic reticulum to the retinal rod plasma membrane. The chain is Receptor expression-enhancing protein 6 from Danio rerio (Zebrafish).